Consider the following 323-residue polypeptide: Dehydrogenase/reductase SDR family member 7B (323 aa).

At 1 to 4 (MDLT) the chain is on the cytoplasmic side. The helical; Signal-anchor for type II membrane protein transmembrane segment at 5-25 (SWAIFPLLLASIGVYGLYKLL) threads the bilayer. Over 26 to 272 (QKLRSGAYLQ…AVGERRKELL (247 aa)) the chain is Lumenal. The NAD(+) site is built by S46 and L48. Substrate is bound at residue S178. NAD(+)-binding residues include Y191, K195, and T226. Residue Y191 is the Proton acceptor of the active site.

This sequence belongs to the short-chain dehydrogenases/reductases (SDR) family.

The protein resides in the endoplasmic reticulum membrane. Its function is as follows. Putative oxidoreductase. The chain is Dehydrogenase/reductase SDR family member 7B (dhrs7b) from Xenopus laevis (African clawed frog).